A 331-amino-acid polypeptide reads, in one-letter code: tRNA-cytidine(32) 2-sulfurtransferase (331 aa).

The segment at 1-31 is disordered; it reads MNAPHMNDTTADAATLDATAAPAGRPALTRR. Residues 8 to 23 show a composition bias toward low complexity; sequence DTTADAATLDATAAPA. The PP-loop motif motif lies at 71–76; sequence SGGKDS. Residues C146, C149, and C237 each coordinate [4Fe-4S] cluster.

Belongs to the TtcA family. In terms of assembly, homodimer. Mg(2+) serves as cofactor. [4Fe-4S] cluster is required as a cofactor.

It is found in the cytoplasm. It catalyses the reaction cytidine(32) in tRNA + S-sulfanyl-L-cysteinyl-[cysteine desulfurase] + AH2 + ATP = 2-thiocytidine(32) in tRNA + L-cysteinyl-[cysteine desulfurase] + A + AMP + diphosphate + H(+). It functions in the pathway tRNA modification. In terms of biological role, catalyzes the ATP-dependent 2-thiolation of cytidine in position 32 of tRNA, to form 2-thiocytidine (s(2)C32). The sulfur atoms are provided by the cysteine/cysteine desulfurase (IscS) system. The protein is tRNA-cytidine(32) 2-sulfurtransferase of Burkholderia lata (strain ATCC 17760 / DSM 23089 / LMG 22485 / NCIMB 9086 / R18194 / 383).